We begin with the raw amino-acid sequence, 209 residues long: Protein TIC 20-v, chloroplastic (209 aa).

The transit peptide at 1-49 (MAIISQFFAPLPSLTGTLTLTGRSFLPLNLDTQFPKPRLSRDRAATLVL) directs the protein to the chloroplast. The next 4 membrane-spanning stretches (helical) occupy residues 63 to 83 (IISA…GKFI), 103 to 123 (AFKS…FVVV), 132 to 152 (VRFN…PDLL), and 173 to 193 (TVFL…LFGL).

Belongs to the Tic20 family. As to quaternary structure, part of the Tic complex. As to expression, expressed in leaves, siliques and roots.

It is found in the plastid. The protein localises to the chloroplast inner membrane. In terms of biological role, may be involved in protein precursor import into chloroplasts. Not redundant with TIC20-I, TIC20-II or TIC20-IV. The protein is Protein TIC 20-v, chloroplastic (TIC20-V) of Arabidopsis thaliana (Mouse-ear cress).